We begin with the raw amino-acid sequence, 101 residues long: NADH-quinone oxidoreductase subunit K (101 aa).

3 consecutive transmembrane segments (helical) span residues 4-24 (LTHY…GIFM), 30-50 (LVLL…FIAF), and 61-81 (IFVF…LAIM).

Belongs to the complex I subunit 4L family. NDH-1 is composed of 14 different subunits. Subunits NuoA, H, J, K, L, M, N constitute the membrane sector of the complex.

The protein localises to the cell inner membrane. It catalyses the reaction a quinone + NADH + 5 H(+)(in) = a quinol + NAD(+) + 4 H(+)(out). In terms of biological role, NDH-1 shuttles electrons from NADH, via FMN and iron-sulfur (Fe-S) centers, to quinones in the respiratory chain. The immediate electron acceptor for the enzyme in this species is believed to be ubiquinone. Couples the redox reaction to proton translocation (for every two electrons transferred, four hydrogen ions are translocated across the cytoplasmic membrane), and thus conserves the redox energy in a proton gradient. This is NADH-quinone oxidoreductase subunit K from Neisseria meningitidis serogroup B (strain ATCC BAA-335 / MC58).